The sequence spans 916 residues: Neurofilament medium polypeptide (916 aa).

A compositionally biased stretch (polar residues) spans 1 to 10 (MSYTLDSLGN). A disordered region spans residues 1-51 (MSYTLDSLGNPSAYRRVTETRSSFSRVSGSPSSGFRSQSWSRGSPSTVSSS). S2 is modified (N-acetylserine). The interval 2 to 104 (SYTLDSLGNP…KLSRSNEKEQ (103 aa)) is head. Positions 21-44 (RSSFSRVSGSPSSGFRSQSWSRGS) are enriched in low complexity. The residue at position 30 (S30) is a Phosphoserine. At R42 the chain carries Omega-N-methylarginine. T47 carries O-linked (GlcNAc) threonine glycosylation. S99 bears the Phosphoserine mark. An IF rod domain is found at 101–412 (EKEQLQGLND…KLLEGEETRF (312 aa)). Positions 105 to 136 (LQGLNDRFAGYIEKVHYLEQQNKEIEAEIQAL) are coil 1A. The linker 1 stretch occupies residues 137 to 149 (RQKQASHAQLGDA). The interval 150–248 (YDQEIRELRA…EEEVADLLAQ (99 aa)) is coil 1B. S226 carries the post-translational modification Phosphoserine. The interval 249–265 (IQASHITVERKDYLKTD) is linker 12. Residues 266–287 (ISTALKEIRSQLESHSDQNMHQ) are coil 2A. The linker 2 stretch occupies residues 288–291 (AEEW). The tract at residues 292-412 (FKCRYAKLTE…KLLEGEETRF (121 aa)) is coil 2B. Residue Y320 is modified to Phosphotyrosine. Phosphoserine occurs at positions 346 and 418. The segment at 413–916 (STFAGSITGP…AIVKEVTQSD (504 aa)) is tail. Residue T431 is glycosylated (O-linked (GlcNAc) threonine). S467 and S483 each carry phosphoserine. The segment at 485-851 (KEEKKEAAEE…KKGGDKSEEK (367 aa)) is disordered. Over residues 493 to 505 (EEKEEEPEAEEEE) the composition is skewed to acidic residues. S511 carries the post-translational modification Phosphoserine. Positions 521 to 541 (KEEEGEKEEEEGQEEEEEEDE) are enriched in acidic residues. The segment covering 542–561 (GAKSDQAEEGGSEKEGSSEK) has biased composition (basic and acidic residues). Residues S545, S553, S558, and S559 each carry the phosphoserine modification. Residues 562–582 (EEGEQEEGETEAEAEGEEAEA) are compositionally biased toward acidic residues. T571 is subject to Phosphothreonine. The segment covering 583-614 (KEEKKVEEKSEEVATKEELVADAKVEKPEKAK) has biased composition (basic and acidic residues). 6 tandem repeats follow at residues 614 to 626 (KSPV…EEKG), 627 to 639 (KSPV…EEKG), 640 to 652 (KSPV…EEKG), 653 to 665 (KSPV…EEKG), 666 to 678 (KSPV…EEKA), and 679 to 691 (KSPV…EEAK). Positions 614–691 (KSPVPKSPVE…VPKSPVEEAK (78 aa)) are 6 X 13 AA approximate tandem repeats of K-S-P-V-[PS]-K-S-P-V-E-E-[KA]-[GAK]. S641 and S646 each carry phosphoserine. 2 positions are modified to phosphoserine: S680 and S685. Basic and acidic residues-rich tracts occupy residues 686-701 (PVEE…KGEQ), 707-742 (KEVK…KEEA), and 755-778 (VHLE…EKAG). Position 736 is a phosphoserine (S736). 3 positions are modified to phosphoserine: S783, S821, and S837. Residues 788 to 828 (SDKGAKGSRKEDIAVNGEVEGKEEVEQETKEKGSGREEEKG) are compositionally biased toward basic and acidic residues. Residues 839–851 (ADEKKGGDKSEEK) are compositionally biased toward basic and acidic residues.

The protein belongs to the intermediate filament family. In terms of assembly, forms heterodimers with NEFL; which can further hetero-oligomerize (in vitro). Forms heterodimers with INA (in vitro). There are a number of repeats of the tripeptide K-S-P, NFM is phosphorylated on a number of the serines in this motif. It is thought that phosphorylation of NFM results in the formation of interfilament cross bridges that are important in the maintenance of axonal caliber. Post-translationally, phosphorylation seems to play a major role in the functioning of the larger neurofilament polypeptides (NF-M and NF-H), the levels of phosphorylation being altered developmentally and coincidentally with a change in the neurofilament function. In terms of processing, phosphorylated in the head and rod regions by the PKC kinase PKN1, leading to the inhibition of polymerization.

The protein localises to the cytoplasm. It is found in the cytoskeleton. It localises to the cell projection. The protein resides in the axon. Neurofilaments usually contain three intermediate filament proteins: NEFL, NEFM, and NEFH which are involved in the maintenance of neuronal caliber. May additionally cooperate with the neuronal intermediate filament proteins PRPH and INA to form neuronal filamentous networks. The sequence is that of Neurofilament medium polypeptide (NEFM) from Homo sapiens (Human).